The primary structure comprises 182 residues: Cell wall protein phiA (182 aa).

The N-terminal stretch at 1–18 (MKLTSTAALASLAVAATA) is a signal peptide. N-linked (GlcNAc...) asparagine glycosylation is found at Asn57 and Asn107.

It belongs to the phiA family. Mainly present in phialides and conidia.

The protein localises to the secreted. The protein resides in the cell wall. Functionally, cell wall protein involved in development of asexual structures such as phialide and conidium development, and thus required for spore formation. Plays a role as a general stress protectant produced by the fungus in competition with antagonistic bacteria. In Emericella nidulans (strain FGSC A4 / ATCC 38163 / CBS 112.46 / NRRL 194 / M139) (Aspergillus nidulans), this protein is Cell wall protein phiA.